Reading from the N-terminus, the 358-residue chain is MITTTGLTKVYQSRDREVTALDGVDLHVREGEVYGVIGQSGAGKSSLIRCVNLLERPTSGTVTVAGQDLTALAGRGRRASAELRRARTRIGMVFQHFNLLGSRTVLDNVELPLEILGVSGRDRTRKAGELLDLVGLADKAKAYPGQLSGGQKQRVGIARALAGDPQVLLSDEATSALDPETTRSILQLLRDLNQQLGLTVLLITHEMDVVKTVCDSAALMRRGRIVESGTVAELLATPGSELAHELFPVGGTASGPDRTVVDVTFQGESASRPVISQLSRTYNIDISILGAAMDTVGGRQIGRMRIELPGRFEENVVPIGFLREQGLQAEVVEDETGPQAATVVPEQTPAALTKEVVK.

Positions 2–247 constitute an ABC transporter domain; it reads ITTTGLTKVY…PGSELAHELF (246 aa). 38-45 provides a ligand contact to ATP; it reads GQSGAGKS.

It belongs to the ABC transporter superfamily. Methionine importer (TC 3.A.1.24) family. As to quaternary structure, the complex is composed of two ATP-binding proteins (MetN), two transmembrane proteins (MetI) and a solute-binding protein (MetQ).

The protein resides in the cell membrane. The enzyme catalyses L-methionine(out) + ATP + H2O = L-methionine(in) + ADP + phosphate + H(+). It catalyses the reaction D-methionine(out) + ATP + H2O = D-methionine(in) + ADP + phosphate + H(+). In terms of biological role, part of the ABC transporter complex MetNIQ involved in methionine import. Responsible for energy coupling to the transport system. The polypeptide is Methionine import ATP-binding protein MetN (Streptomyces griseus).